The chain runs to 451 residues: Type 3 secretion system ATPase (451 aa).

184–189 (GGGKST) contributes to the ATP binding site.

It belongs to the ATPase alpha/beta chains family. T3SS ATPase subfamily. The core secretion machinery of the T3SS is composed of approximately 20 different proteins, including cytoplasmic components, a base, an export apparatus and a needle. This subunit is part of the cytosolic complex. Forms homohexamers.

It is found in the cytoplasm. It carries out the reaction ATP + H2O + cellular proteinSide 1 = ADP + phosphate + cellular proteinSide 2.. Its function is as follows. ATPase component of the type III secretion system (T3SS), also called injectisome, which is used to inject bacterial effector proteins into eukaryotic host cells. Acts as a molecular motor to provide the energy that is required for the export of proteins. Required for type III secretion apparatus (T3SA) formation, proper protein secretion, host cell invasion and virulence. May play a critical role in T3SS substrate recognition, disassembly of the effector/chaperone complex and unfolding of the effector in an ATP-dependent manner prior to secretion. This chain is Type 3 secretion system ATPase, found in Sinorhizobium fredii (strain NBRC 101917 / NGR234).